Here is a 463-residue protein sequence, read N- to C-terminus: NADH dehydrogenase [ubiquinone] iron-sulfur protein 2, mitochondrial (463 aa).

The transit peptide at 1–33 directs the protein to the mitochondrion; it reads MAALRALGGLRGVAAQVLRPGAGVRLPIQPSRG. The residue at position 62 (K62) is an N6-acetyllysine. R118 carries the symmetric dimethylarginine modification. [4Fe-4S] cluster is bound by residues C326, C332, and C347.

This sequence belongs to the complex I 49 kDa subunit family. As to quaternary structure, core subunit of respiratory chain NADH dehydrogenase (Complex I) which is composed of 45 different subunits. Component of the iron-sulfur (IP) fragment of the enzyme. Interacts with NDUFAF3. Interacts with NDUFAF7. Interacts with CERS2. [4Fe-4S] cluster is required as a cofactor. Post-translationally, dimethylation at Arg-118 by NDUFAF7 takes place after NDUFS2 assembles into the complex I, leading to stabilize the early intermediate complex.

The protein resides in the mitochondrion inner membrane. The enzyme catalyses a ubiquinone + NADH + 5 H(+)(in) = a ubiquinol + NAD(+) + 4 H(+)(out). Core subunit of the mitochondrial membrane respiratory chain NADH dehydrogenase (Complex I) which catalyzes electron transfer from NADH through the respiratory chain, using ubiquinone as an electron acceptor. Essential for the catalytic activity and assembly of complex I. Redox-sensitive, critical component of the oxygen-sensing pathway in the pulmonary vasculature which plays a key role in acute pulmonary oxygen-sensing and hypoxic pulmonary vasoconstriction. Plays an important role in carotid body sensing of hypoxia. Essential for glia-like neural stem and progenitor cell proliferation, differentiation and subsequent oligodendrocyte or neuronal maturation. This Pongo pygmaeus (Bornean orangutan) protein is NADH dehydrogenase [ubiquinone] iron-sulfur protein 2, mitochondrial (NDUFS2).